We begin with the raw amino-acid sequence, 331 residues long: NADH-quinone oxidoreductase subunit H (331 aa).

8 consecutive transmembrane segments (helical) span residues 7-27 (ALVT…AVVI), 81-101 (MIFT…FAIV), 114-134 (IGIL…LFAG), 154-174 (ISYE…VGSF), 187-207 (VWFI…GVAV), 238-258 (FFVG…TLFF), 271-291 (WLSF…FILI), and 310-330 (VCLP…LAAA).

This sequence belongs to the complex I subunit 1 family. As to quaternary structure, NDH-1 is composed of 13 different subunits. Subunits NuoA, H, J, K, L, M, N constitute the membrane sector of the complex.

The protein resides in the cell inner membrane. The catalysed reaction is a quinone + NADH + 5 H(+)(in) = a quinol + NAD(+) + 4 H(+)(out). NDH-1 shuttles electrons from NADH, via FMN and iron-sulfur (Fe-S) centers, to quinones in the respiratory chain. The immediate electron acceptor for the enzyme in this species is believed to be ubiquinone. Couples the redox reaction to proton translocation (for every two electrons transferred, four hydrogen ions are translocated across the cytoplasmic membrane), and thus conserves the redox energy in a proton gradient. This subunit may bind ubiquinone. In Pseudomonas aeruginosa (strain ATCC 15692 / DSM 22644 / CIP 104116 / JCM 14847 / LMG 12228 / 1C / PRS 101 / PAO1), this protein is NADH-quinone oxidoreductase subunit H.